The chain runs to 829 residues: UBA domain-containing protein 8 (829 aa).

Residues 10–109 (EQQEFDRLLE…KQAKDDHHIK (100 aa)) form the EH 1 domain. In terms of domain architecture, EF-hand 1 spans 43–78 (LPQKILAKIWDYCDQEDKGSLDRNQVYACFRLISQA). Positions 93-121 (GDPPILPKQAKDDHHIKRSSSETADFTPF) are disordered. 2 positions are modified to phosphoserine: Ser112 and Ser113. 2 consecutive EH domains span residues 129–225 (ERSE…AKSE) and 300–398 (DRSN…SDDT). In terms of domain architecture, EF-hand 2 spans 333–368 (LDSEELARIWDTVDTQDRGYIDKDEFAVAMEIIKLR). Polar residues-rich tracts occupy residues 466–506 (SFQD…TQSI) and 574–590 (TIPGSTSAALDDQQTTE). Disordered stretches follow at residues 466-520 (SFQD…VNSS), 574-614 (TIPG…MRKL), and 724-785 (KPQV…QSYE). A coiled-coil region spans residues 602 to 709 (EPTEEEQEEM…AKIDSIIADS (108 aa)). A compositionally biased stretch (pro residues) spans 728–737 (TPAPPTPAPT). The span at 764–774 (HANSSTPMNYV) shows a compositional bias: polar residues. Residues 775 to 785 (SQPESPPQSYE) are compositionally biased toward low complexity. The region spanning 788-828 (QNDNELLQELLSMGFPREKAVIALEATNYDVNEAANILLSS) is the UBA domain.

This Schizosaccharomyces pombe (strain 972 / ATCC 24843) (Fission yeast) protein is UBA domain-containing protein 8 (ucp8).